The primary structure comprises 353 residues: Phospho-N-acetylmuramoyl-pentapeptide-transferase (353 aa).

10 helical membrane-spanning segments follow: residues 22-42 (FAFFIALCLSLFLMPKFITWA), 65-85 (TPTMGGLIFISSAVIASLFCI), 88-108 (DNIFAISALLCLILFCLIGLI), 129-149 (LLAQIIAGLICILPLYFSSEL), 161-181 (PLFDMEIFAIAFWILVLISSS), 192-212 (GLATVPGIFSLSTLGIFLYLS), 228-248 (GLGEVVIICAALIGALMGFLW), 256-276 (VFMGDSGSLALGGFIGFLAVI), 281-301 (ILLLLIGFVFVLETVSVILQV), and 330-350 (KIIVRFWMIALLSNLLALASI).

Belongs to the glycosyltransferase 4 family. MraY subfamily. Mg(2+) is required as a cofactor.

It localises to the cell inner membrane. It carries out the reaction UDP-N-acetyl-alpha-D-muramoyl-L-alanyl-gamma-D-glutamyl-meso-2,6-diaminopimeloyl-D-alanyl-D-alanine + di-trans,octa-cis-undecaprenyl phosphate = di-trans,octa-cis-undecaprenyl diphospho-N-acetyl-alpha-D-muramoyl-L-alanyl-D-glutamyl-meso-2,6-diaminopimeloyl-D-alanyl-D-alanine + UMP. It participates in cell wall biogenesis; peptidoglycan biosynthesis. Its function is as follows. Catalyzes the initial step of the lipid cycle reactions in the biosynthesis of the cell wall peptidoglycan: transfers peptidoglycan precursor phospho-MurNAc-pentapeptide from UDP-MurNAc-pentapeptide onto the lipid carrier undecaprenyl phosphate, yielding undecaprenyl-pyrophosphoryl-MurNAc-pentapeptide, known as lipid I. The sequence is that of Phospho-N-acetylmuramoyl-pentapeptide-transferase from Campylobacter jejuni subsp. jejuni serotype O:2 (strain ATCC 700819 / NCTC 11168).